We begin with the raw amino-acid sequence, 145 residues long: D-aminoacyl-tRNA deacylase (145 aa).

The Gly-cisPro motif, important for rejection of L-amino acids signature appears at 137-138 (GP).

This sequence belongs to the DTD family. In terms of assembly, homodimer.

It localises to the cytoplasm. The catalysed reaction is glycyl-tRNA(Ala) + H2O = tRNA(Ala) + glycine + H(+). The enzyme catalyses a D-aminoacyl-tRNA + H2O = a tRNA + a D-alpha-amino acid + H(+). Its function is as follows. An aminoacyl-tRNA editing enzyme that deacylates mischarged D-aminoacyl-tRNAs. Also deacylates mischarged glycyl-tRNA(Ala), protecting cells against glycine mischarging by AlaRS. Acts via tRNA-based rather than protein-based catalysis; rejects L-amino acids rather than detecting D-amino acids in the active site. By recycling D-aminoacyl-tRNA to D-amino acids and free tRNA molecules, this enzyme counteracts the toxicity associated with the formation of D-aminoacyl-tRNA entities in vivo and helps enforce protein L-homochirality. This Exiguobacterium sibiricum (strain DSM 17290 / CCUG 55495 / CIP 109462 / JCM 13490 / 255-15) protein is D-aminoacyl-tRNA deacylase.